The following is a 574-amino-acid chain: uncharacterized protein (574 aa).

The next 11 membrane-spanning stretches (helical) occupy residues 14-34 (FFPT…LFFG), 54-74 (VVPL…LGIV), 124-144 (WLMA…SDTA), 205-225 (ICKC…TGTI), 253-273 (SWMA…WFIV), 323-343 (LVIF…VIPG), 350-370 (KGYV…FIWP), 403-423 (FPWS…AVRV), 441-461 (MPFF…TEFS), 485-505 (PLYF…LPMA), and 520-540 (MIDM…ITAI). Residues N565 and N569 are each glycosylated (N-linked (GlcNAc...) asparagine).

Belongs to the SLC13A/DASS transporter (TC 2.A.47) family. NADC subfamily.

The protein localises to the membrane. This is an uncharacterized protein from Caenorhabditis elegans.